Here is a 470-residue protein sequence, read N- to C-terminus: Dihydrolipoyl dehydrogenase (470 aa).

Residues Glu39–Cys47, Lys56, and Ala119 contribute to the FAD site. Cysteines 47 and 52 form a disulfide. Residues Gly183–Ile187, Glu206, and Thr271–Arg274 each bind NAD(+). FAD contacts are provided by Asp314 and Ala322. His446 functions as the Proton acceptor in the catalytic mechanism.

Belongs to the class-I pyridine nucleotide-disulfide oxidoreductase family. As to quaternary structure, homodimer. Identified in a complex with PdhC. FAD serves as cofactor.

It is found in the cytoplasm. The catalysed reaction is N(6)-[(R)-dihydrolipoyl]-L-lysyl-[protein] + NAD(+) = N(6)-[(R)-lipoyl]-L-lysyl-[protein] + NADH + H(+). Lipoamide dehydrogenase is a component of the alpha-ketoacid dehydrogenase complexes. This chain is Dihydrolipoyl dehydrogenase (pdhD), found in Geobacillus stearothermophilus (Bacillus stearothermophilus).